The chain runs to 388 residues: Phosphoglycerate kinase (388 aa).

Substrate contacts are provided by residues 24-26 (DLN), R37, 56-59 (RGGR), R117, and R165. Residues 26–136 (NVPLDSDGEQ…RRPRNVQGRR (111 aa)) are disordered. A compositionally biased stretch (basic and acidic residues) spans 34–55 (EQGRITDPGPDHRVGADVERTG). The segment covering 102–136 (GGHRRPGPRRGVDRRRRPAAGKHPVRRPRNVQGRR) has biased composition (basic residues). ATP is bound by residues K215, G303, E334, and 363–366 (GGDS).

This sequence belongs to the phosphoglycerate kinase family. Monomer.

It is found in the cytoplasm. The catalysed reaction is (2R)-3-phosphoglycerate + ATP = (2R)-3-phospho-glyceroyl phosphate + ADP. The protein operates within carbohydrate degradation; glycolysis; pyruvate from D-glyceraldehyde 3-phosphate: step 2/5. The polypeptide is Phosphoglycerate kinase (pgk) (Mycobacterium avium).